We begin with the raw amino-acid sequence, 224 residues long: uncharacterized protein (224 aa).

Residues H57, H59, D61, H62, H138, D162, and H203 each coordinate Zn(2+).

The protein belongs to the metallo-beta-lactamase superfamily. Glyoxalase II family. The cofactor is Zn(2+).

This is an uncharacterized protein from Mycobacterium tuberculosis (strain CDC 1551 / Oshkosh).